The following is a 402-amino-acid chain: Elongation factor Tu (402 aa).

Positions 10–212 (KPHINIGTIG…AVDEYIPEPK (203 aa)) constitute a tr-type G domain. The tract at residues 19–26 (GHVDHGKT) is G1. GTP is bound at residue 19–26 (GHVDHGKT). Thr26 contributes to the Mg(2+) binding site. The interval 60–64 (GITIA) is G2. The tract at residues 81–84 (DCPG) is G3. Residues 81-85 (DCPGH) and 136-139 (NKED) each bind GTP. The interval 136–139 (NKED) is G4. A G5 region spans residues 177 to 179 (SAF).

Belongs to the TRAFAC class translation factor GTPase superfamily. Classic translation factor GTPase family. EF-Tu/EF-1A subfamily. In terms of assembly, monomer.

It is found in the cytoplasm. The enzyme catalyses GTP + H2O = GDP + phosphate + H(+). Its function is as follows. GTP hydrolase that promotes the GTP-dependent binding of aminoacyl-tRNA to the A-site of ribosomes during protein biosynthesis. The polypeptide is Elongation factor Tu (Sulfurovum sp. (strain NBC37-1)).